We begin with the raw amino-acid sequence, 99 residues long: Bublin coiled-coil protein (99 aa).

Residues 34 to 71 (LDQINSCLDDIEERNDALNGKLQELLESNRAARRDFRQ) are a coiled coil. Over residues 66–78 (RRDFRQQITDHAD) the composition is skewed to basic and acidic residues. Positions 66–99 (RRDFRQQITDHADLPPPANDDDEDEQSRDAQKKD) are disordered.

It belongs to the UPF0184 (EST00098) family.

It is found in the cell junction. The protein localises to the cytoplasm. It localises to the cytoskeleton. Functionally, essential for intermediate filament organization in intestinal cells, interacts with intermediate filament and regulates intestinal lumen morphology. The chain is Bublin coiled-coil protein (bbln) from Danio rerio (Zebrafish).